Reading from the N-terminus, the 994-residue chain is NACHT, LRR and PYD domains-containing protein 4 (994 aa).

Residues 1–94 (MAASFFSDFG…CMKVMRERTG (94 aa)) form the Pyrin domain. Residues 149-472 (RTVIIQGPQG…FYLLKSHLDH (324 aa)) enclose the NACHT domain. 155–162 (GPQGIGKT) provides a ligand contact to ATP. LRR repeat units follow at residues 637–660 (SGHL…TWCN), 698–721 (YLSF…LNYP), 722–745 (AGNV…VLAG), 750–777 (NKKL…LCSP), 806–833 (NKSV…ALKH), 863–886 (NQNL…LLCR), 920–943 (SKTL…VLCE), and 949–972 (ECAL…LLTA).

It belongs to the NLRP family. As to quaternary structure, interacts with CHUK/IKKA, inhibiting its kinase activity.

Its function is as follows. May be involved in inflammation and recognition of cytosolic pathogen-associated molecular patterns (PAMPs) not intercepted by membrane-bound receptors. Acts as a negative regulator of the type I interferon signaling pathway by serving as an adapter to promote DTX4-mediated ubiquitination of activated TBK1, and its subsequent degradation. Suppresses NF-kappaB induction by the cytokines TNFA and IL1B, suggesting that it operates at a point of convergence in these two cytokine signaling pathways. In Homo sapiens (Human), this protein is NACHT, LRR and PYD domains-containing protein 4.